The following is a 261-amino-acid chain: Phosphatidylglycerol--prolipoprotein diacylglyceryl transferase (261 aa).

The next 3 membrane-spanning stretches (helical) occupy residues 20 to 40 (LAIH…VWLA), 54 to 74 (IIDF…LYYV), and 94 to 114 (GGGA…VFSY). Residue R139 coordinates a 1,2-diacyl-sn-glycero-3-phospho-(1'-sn-glycerol). The next 3 membrane-spanning stretches (helical) occupy residues 175 to 195 (MPTF…VMVF), 205 to 225 (GDIF…VEGM), and 235 to 255 (ARVS…LFIY).

This sequence belongs to the Lgt family.

The protein resides in the cell membrane. It carries out the reaction L-cysteinyl-[prolipoprotein] + a 1,2-diacyl-sn-glycero-3-phospho-(1'-sn-glycerol) = an S-1,2-diacyl-sn-glyceryl-L-cysteinyl-[prolipoprotein] + sn-glycerol 1-phosphate + H(+). Its pathway is protein modification; lipoprotein biosynthesis (diacylglyceryl transfer). Its function is as follows. Catalyzes the transfer of the diacylglyceryl group from phosphatidylglycerol to the sulfhydryl group of the N-terminal cysteine of a prolipoprotein, the first step in the formation of mature lipoproteins. The chain is Phosphatidylglycerol--prolipoprotein diacylglyceryl transferase from Lactococcus lactis subsp. lactis (strain IL1403) (Streptococcus lactis).